Consider the following 181-residue polypeptide: 3-isopropylmalate dehydratase small subunit (181 aa).

It belongs to the LeuD family. LeuD type 2 subfamily. As to quaternary structure, heterodimer of LeuC and LeuD.

The enzyme catalyses (2R,3S)-3-isopropylmalate = (2S)-2-isopropylmalate. It functions in the pathway amino-acid biosynthesis; L-leucine biosynthesis; L-leucine from 3-methyl-2-oxobutanoate: step 2/4. In terms of biological role, catalyzes the isomerization between 2-isopropylmalate and 3-isopropylmalate, via the formation of 2-isopropylmaleate. The polypeptide is 3-isopropylmalate dehydratase small subunit (Deinococcus deserti (strain DSM 17065 / CIP 109153 / LMG 22923 / VCD115)).